A 176-amino-acid polypeptide reads, in one-letter code: Inner membrane protein p54 (176 aa).

A helical membrane pass occupies residues 32-52 (YTILIAIVVLIIIIIVLIYLF). The disordered stretch occupies residues 82-176 (VTPQPGIAKP…YTHKDLENSL (95 aa)). The span at 123–154 (GMAAGGPAAASAPAHPAELYTTATTQNTASQT) shows a compositional bias: low complexity. Residues 142–154 (YTTATTQNTASQT) form an interaction with host DYNLL1 region.

Belongs to the asfivirus envelope protein p54 family. As to quaternary structure, interacts with the host light chain cytoplasmic dynein DYNLL1; this interaction is critical for intracellular microtubule-dependent virus transport toward viral factories.

The protein resides in the virion membrane. It localises to the host cytoplasm. Its subcellular location is the host cytoskeleton. It is found in the host endoplasmic reticulum membrane. Functionally, inner envelope protein involved, through its interaction with host dynein, in the intracellular microtubule-dependent transport of viral capsid toward viral factories. Seems to induce caspase-3 activation and apoptosis. Plays a role in virion morphogenesis by recruiting and transforming the host ER membranes into the precursors of the viral envelope. Involved in virus attachment to the host cell. This is Inner membrane protein p54 from African swine fever virus (isolate Tick/Malawi/Lil 20-1/1983) (ASFV).